The following is a 529-amino-acid chain: Bifunctional purine biosynthesis protein PurH (529 aa).

One can recognise an MGS-like domain in the interval 2 to 149; that stretch reads TDLVPLRRAL…KNHSFVTVLT (148 aa).

This sequence belongs to the PurH family.

The enzyme catalyses (6R)-10-formyltetrahydrofolate + 5-amino-1-(5-phospho-beta-D-ribosyl)imidazole-4-carboxamide = 5-formamido-1-(5-phospho-D-ribosyl)imidazole-4-carboxamide + (6S)-5,6,7,8-tetrahydrofolate. The catalysed reaction is IMP + H2O = 5-formamido-1-(5-phospho-D-ribosyl)imidazole-4-carboxamide. The protein operates within purine metabolism; IMP biosynthesis via de novo pathway; 5-formamido-1-(5-phospho-D-ribosyl)imidazole-4-carboxamide from 5-amino-1-(5-phospho-D-ribosyl)imidazole-4-carboxamide (10-formyl THF route): step 1/1. Its pathway is purine metabolism; IMP biosynthesis via de novo pathway; IMP from 5-formamido-1-(5-phospho-D-ribosyl)imidazole-4-carboxamide: step 1/1. In Dinoroseobacter shibae (strain DSM 16493 / NCIMB 14021 / DFL 12), this protein is Bifunctional purine biosynthesis protein PurH.